The primary structure comprises 160 residues: Nucleotide-binding protein CBU_0114 (160 aa).

The protein belongs to the YajQ family.

Nucleotide-binding protein. This is Nucleotide-binding protein CBU_0114 from Coxiella burnetii (strain RSA 493 / Nine Mile phase I).